Here is a 105-residue protein sequence, read N- to C-terminus: Putative membrane protein insertion efficiency factor (105 aa).

Residues 68-105 are disordered; the sequence is FHPGGLDPVPPRRNESGTEISDARPGSDGEASPGAPGL. A compositionally biased stretch (basic and acidic residues) spans 77-94; it reads PPRRNESGTEISDARPGS.

Belongs to the UPF0161 family.

It is found in the cell membrane. Functionally, could be involved in insertion of integral membrane proteins into the membrane. The chain is Putative membrane protein insertion efficiency factor from Thermobifida fusca (strain YX).